Consider the following 265-residue polypeptide: Glutamate racemase (265 aa).

Residues 9 to 10 (DS) and 41 to 42 (YS) contribute to the substrate site. Residue Cys73 is the Proton donor/acceptor of the active site. Residue 74 to 75 (NT) coordinates substrate. Cys184 (proton donor/acceptor) is an active-site residue. Substrate is bound at residue 185-186 (TH).

Belongs to the aspartate/glutamate racemases family.

It carries out the reaction L-glutamate = D-glutamate. The protein operates within cell wall biogenesis; peptidoglycan biosynthesis. Its function is as follows. Provides the (R)-glutamate required for cell wall biosynthesis. The sequence is that of Glutamate racemase from Actinobacillus pleuropneumoniae serotype 3 (strain JL03).